A 290-amino-acid polypeptide reads, in one-letter code: Thymidylate synthase (290 aa).

Residue Arg31 coordinates dUMP. Residue His61 coordinates (6R)-5,10-methylene-5,6,7,8-tetrahydrofolate. 152 to 153 contributes to the dUMP binding site; sequence RR. Residue Cys172 is the Nucleophile of the active site. Residues 192–195, Asn203, and 233–235 each bind dUMP; these read RSAD and HIY. A (6R)-5,10-methylene-5,6,7,8-tetrahydrofolate-binding site is contributed by Asp195. Ala289 serves as a coordination point for (6R)-5,10-methylene-5,6,7,8-tetrahydrofolate.

It belongs to the thymidylate synthase family. Bacterial-type ThyA subfamily. In terms of assembly, homodimer.

It localises to the cytoplasm. It carries out the reaction dUMP + (6R)-5,10-methylene-5,6,7,8-tetrahydrofolate = 7,8-dihydrofolate + dTMP. It participates in pyrimidine metabolism; dTTP biosynthesis. Catalyzes the reductive methylation of 2'-deoxyuridine-5'-monophosphate (dUMP) to 2'-deoxythymidine-5'-monophosphate (dTMP) while utilizing 5,10-methylenetetrahydrofolate (mTHF) as the methyl donor and reductant in the reaction, yielding dihydrofolate (DHF) as a by-product. This enzymatic reaction provides an intracellular de novo source of dTMP, an essential precursor for DNA biosynthesis. This chain is Thymidylate synthase, found in Psychrobacter cryohalolentis (strain ATCC BAA-1226 / DSM 17306 / VKM B-2378 / K5).